The primary structure comprises 214 residues: GTP cyclohydrolase 1 (214 aa).

Zn(2+)-binding residues include Cys108, His111, and Cys179.

It belongs to the GTP cyclohydrolase I family. Toroid-shaped homodecamer, composed of two pentamers of five dimers.

It carries out the reaction GTP + H2O = 7,8-dihydroneopterin 3'-triphosphate + formate + H(+). Its pathway is cofactor biosynthesis; 7,8-dihydroneopterin triphosphate biosynthesis; 7,8-dihydroneopterin triphosphate from GTP: step 1/1. This is GTP cyclohydrolase 1 from Shewanella putrefaciens (strain CN-32 / ATCC BAA-453).